The sequence spans 127 residues: MSIPNNLRYSEEHEWVKTEGNEVVIGITHFAQSELGDIVFVELPEVGATIEADEPFGSVESVKTVSELYAPVSGKVVAVNEELSDQPELVNESPYEGAWMVKVELSDASQVEKLLTAEKYAEMTNQD.

The Lipoyl-binding domain occupies 22–104; sequence EVVIGITHFA…YEGAWMVKVE (83 aa). The residue at position 63 (Lys63) is an N6-lipoyllysine.

The protein belongs to the GcvH family. In terms of assembly, the glycine cleavage system is composed of four proteins: P, T, L and H. Requires (R)-lipoate as cofactor.

The glycine cleavage system catalyzes the degradation of glycine. The H protein shuttles the methylamine group of glycine from the P protein to the T protein. Its function is as follows. Is also involved in protein lipoylation via its role as an octanoyl/lipoyl carrier protein intermediate. This chain is Glycine cleavage system H protein, found in Bacillus cereus (strain ATCC 10987 / NRS 248).